Here is a 469-residue protein sequence, read N- to C-terminus: UDP-N-acetylmuramoylalanine--D-glutamate ligase (469 aa).

110–116 is a binding site for ATP; sequence GTNGKST.

The protein belongs to the MurCDEF family.

It is found in the cytoplasm. The catalysed reaction is UDP-N-acetyl-alpha-D-muramoyl-L-alanine + D-glutamate + ATP = UDP-N-acetyl-alpha-D-muramoyl-L-alanyl-D-glutamate + ADP + phosphate + H(+). The protein operates within cell wall biogenesis; peptidoglycan biosynthesis. Functionally, cell wall formation. Catalyzes the addition of glutamate to the nucleotide precursor UDP-N-acetylmuramoyl-L-alanine (UMA). This is UDP-N-acetylmuramoylalanine--D-glutamate ligase from Synechococcus sp. (strain JA-3-3Ab) (Cyanobacteria bacterium Yellowstone A-Prime).